The following is a 323-amino-acid chain: CTD kinase subunit beta (323 aa).

Belongs to the cyclin family. In terms of assembly, CTDK-I consists of three subunits, CTK1, CTK2 and CTK3 (also called alpha, beta and gamma). Interacts with CTK1. Heterodimerization with CTK3 is required to protect this subunit from degradation. Post-translationally, phosphorylated. Ubiquitinated. Phosphorylation and ubiquitination lead to degradation in growth-related way by the ubiquitin-proteasome pathway. Neither phosphorylation nor degradation requires association with CTK1.

It is found in the nucleus. It localises to the nucleolus. Its function is as follows. Cyclin subunit of the CTDK-I complex, which hyperphosphorylates the C-terminal heptapeptide repeat domain (CTD) of the largest RNA polymerase II subunit. CTDK-I phosphorylates 'Ser-5' if the CTD substrate is not phosphorylated at 'Ser-5', but will phosphorylate 'Ser-2' of a CTD substrate if 'Ser-5' is already phosphorylated. CTDK-I is also more reactive toward substrates that are prephosphorylated at 'Ser-2' or 'Ser-5' compared with an unphosphorylated CTD substrate, therefore efficiently creating doubly phosphorylated CTD repeats. Involved in RNA polymerase II transcriptional elongation, and as part of the CTDK-I complex, pre-mRNA 3'-end processing and SET2 mediated H3K36 methylation. Together with CTK3, required for CTK1 CTD kinase activation. Required for DNA damage induced transcription. Involved in the adaptation to alternative carbon sources, including galactose, glycerol and ethanol, but not raffinose. Required for the integrity of the rDNA locus. This chain is CTD kinase subunit beta (CTK2), found in Saccharomyces cerevisiae (strain ATCC 204508 / S288c) (Baker's yeast).